We begin with the raw amino-acid sequence, 473 residues long: Ribulose bisphosphate carboxylase large chain (473 aa).

Positions 116 and 166 each coordinate substrate. The active-site Proton acceptor is the Lys168. A substrate-binding site is contributed by Lys170. Mg(2+)-binding residues include Lys194, Asp196, and Glu197. Residue Lys194 is modified to N6-carboxylysine. Residue His287 is the Proton acceptor of the active site. Substrate contacts are provided by Arg288, His320, and Ser372.

This sequence belongs to the RuBisCO large chain family. Type I subfamily. As to quaternary structure, heterohexadecamer of 8 large chains and 8 small chains. In R.sphaeroides the complex is approximately 500 kDa. Mg(2+) serves as cofactor.

The enzyme catalyses 2 (2R)-3-phosphoglycerate + 2 H(+) = D-ribulose 1,5-bisphosphate + CO2 + H2O. It catalyses the reaction D-ribulose 1,5-bisphosphate + O2 = 2-phosphoglycolate + (2R)-3-phosphoglycerate + 2 H(+). In terms of biological role, ruBisCO catalyzes two reactions: the carboxylation of D-ribulose 1,5-bisphosphate, the primary event in carbon dioxide fixation, as well as the oxidative fragmentation of the pentose substrate. Both reactions occur simultaneously and in competition at the same active site. The chain is Ribulose bisphosphate carboxylase large chain from Thiobacillus denitrificans (strain ATCC 25259 / T1).